Here is a 364-residue protein sequence, read N- to C-terminus: Cobalt-precorrin-5B C(1)-methyltransferase (364 aa).

This sequence belongs to the CbiD family.

The catalysed reaction is Co-precorrin-5B + S-adenosyl-L-methionine = Co-precorrin-6A + S-adenosyl-L-homocysteine. It participates in cofactor biosynthesis; adenosylcobalamin biosynthesis; cob(II)yrinate a,c-diamide from sirohydrochlorin (anaerobic route): step 6/10. In terms of biological role, catalyzes the methylation of C-1 in cobalt-precorrin-5B to form cobalt-precorrin-6A. This is Cobalt-precorrin-5B C(1)-methyltransferase from Pseudomonas putida (strain ATCC 700007 / DSM 6899 / JCM 31910 / BCRC 17059 / LMG 24140 / F1).